The chain runs to 519 residues: Iroquois-class homeodomain protein IRX-4 (519 aa).

The segment at residues 143–204 (GTRRKNATRE…NARRRLKKEN (62 aa)) is a DNA-binding region (homeobox; TALE-type). The segment at 204–298 (NKMTWPPRNK…VPAAPDGPVK (95 aa)) is disordered. A compositionally biased stretch (basic and acidic residues) spans 213-222 (KCADEKRPYA). Acidic residues-rich tracts occupy residues 223 to 235 (EGEE…EEAR) and 257 to 267 (LSDLDDFDPLE).

The protein belongs to the TALE/IRO homeobox family. In terms of assembly, interacts with the vitamin D receptor VDR but doesn't affect its transactivation activity. As to expression, predominantly expressed in cardiac ventricles.

Its subcellular location is the nucleus. Functionally, likely to be an important mediator of ventricular differentiation during cardiac development. In Homo sapiens (Human), this protein is Iroquois-class homeodomain protein IRX-4 (IRX4).